The chain runs to 574 residues: FAD-linked oxidoreductase sor8 (574 aa).

An N-terminal signal peptide occupies residues 1 to 27 (MYAPPFVRAFGIAVLAVLPSFSSPATA). Asn-58, Asn-112, Asn-136, Asn-266, Asn-312, Asn-363, and Asn-384 each carry an N-linked (GlcNAc...) asparagine glycan. One can recognise an FAD-binding PCMH-type domain in the interval 126–305 (VIGTYVQYAV…YSMTVKAHAN (180 aa)).

The protein belongs to the oxygen-dependent FAD-linked oxidoreductase family. It depends on FAD as a cofactor.

The protein operates within secondary metabolite biosynthesis. Its function is as follows. FAD-linked oxidoreductase; part of the SOR gene cluster that mediates the biosynthesis of sorbicillinoids, a diverse group of yellow secondary metabolites that restrict growth of competing pathogenic fungi but not of bacteria. Sorbicillinoids biosynthesis requires the action of two PKSs. The SOR cluster is required for the production of trichodimerol and dihydrotrichotetronin, with sor2 being sufficient for production of trichodimerol, but not dihydrotrichotetronin in the light. Sor1 iteratively combines three acetyl units and the growing chain is modified by the ketoacyl reductase subunit, and optional by the enoyl reductase subunit in the second cycle. The polyketide is then handed over to the PKS sor2, which adds three more acetyl units, and two methyl groups. Sor2 releases an aldehyde, which undergoes spontaneous cyclization resulting in the formation of sorbicillin or 2',3'-dihydrosorbicillin. The monooxygenase sor5 oxidizes sorbicillin and 2',3'-dihydrosorbicillin to 2',3'-dihydrosorbicillinol and sorbicillinol, respectively. The oxidoreductase sor8 further converts sorbicillinol into oxosorbicillinol. Sorbicillinol is the building block for the other sorbicillinoids such as disorbicillinol, bisvertinolon, dihydrobisvertinolone, and dihydrotrichotetronine. This Hypocrea jecorina (strain QM6a) (Trichoderma reesei) protein is FAD-linked oxidoreductase sor8.